We begin with the raw amino-acid sequence, 481 residues long: MAQSAERPRPYAFMTANATRPVRTRFAPSPTGFLHLGGARTALFSWAFARHHQGVFVLRIEDTDVERSTPEAVQAILDSMDWLGMQPDEGPFYQMKRMDRYAEVLAGMLEAGTAYHCYCSPEEVDAMREAARAKGLKPRYDGTWRPEPGKTLPPVPADRKPVIRFRNPIDGATSWNDMVKGPISFDNGELDDLIIARPDGTPTYNFCVVVDDWDMGITHVLRGDDHVNNTPRQINILRALGATLPEYGHVPMILGPDGEKLSKRHGAVNVMEYDAQGYLPEAMINYLARLGWSHGDDELFTREQLVEWFDTRHLSKSASQWDPKKLNWVNAHYIKGMDDAELAGRVAPRVERRGGKPQAADLPAIMGLLKDRAETLEQLAEDAMLFCGEYQPAPAELAAQHLTETARAALADFAARARDTEWNRAAISALIKAVLADRGLKMPQLGIPLRVAVTGRAQTPAVDAVLELLGKETVLARLQAL.

The 'HIGH' region motif lies at 28-38 (PSPTGFLHLGG). Residues 139–148 (RYDGTWRPEP) are compositionally biased toward basic and acidic residues. The interval 139-159 (RYDGTWRPEPGKTLPPVPADR) is disordered. The short motif at 260-264 (KLSKR) is the 'KMSKS' region element. Lysine 263 provides a ligand contact to ATP.

Belongs to the class-I aminoacyl-tRNA synthetase family. Glutamate--tRNA ligase type 1 subfamily. As to quaternary structure, monomer.

It localises to the cytoplasm. It catalyses the reaction tRNA(Glu) + L-glutamate + ATP = L-glutamyl-tRNA(Glu) + AMP + diphosphate. Catalyzes the attachment of glutamate to tRNA(Glu) in a two-step reaction: glutamate is first activated by ATP to form Glu-AMP and then transferred to the acceptor end of tRNA(Glu). This is Glutamate--tRNA ligase from Bordetella parapertussis (strain 12822 / ATCC BAA-587 / NCTC 13253).